Reading from the N-terminus, the 544-residue chain is CTP synthase (544 aa).

Positions 1 to 265 are amidoligase domain; sequence MTRYIFITGG…DTQVLAYFGL (265 aa). Position 13 (S13) interacts with CTP. S13 is a UTP binding site. 14 to 19 lines the ATP pocket; the sequence is SLGKGL. Y54 contacts L-glutamine. D71 provides a ligand contact to ATP. D71 and E139 together coordinate Mg(2+). CTP-binding positions include 146 to 148, 186 to 191, and K222; these read DIE and KTKPTQ. UTP is bound by residues 186 to 191 and K222; that span reads KTKPTQ. V240 contributes to the ATP binding site. One can recognise a Glutamine amidotransferase type-1 domain in the interval 291–543; sequence TIAVVGKYTS…IKAAIEQSRL (253 aa). G353 is a binding site for L-glutamine. C380 (nucleophile; for glutamine hydrolysis) is an active-site residue. L-glutamine is bound by residues 381 to 384, E404, and R472; that span reads FGMQ. Active-site residues include H516 and E518.

This sequence belongs to the CTP synthase family. As to quaternary structure, homotetramer.

It carries out the reaction UTP + L-glutamine + ATP + H2O = CTP + L-glutamate + ADP + phosphate + 2 H(+). It catalyses the reaction L-glutamine + H2O = L-glutamate + NH4(+). The catalysed reaction is UTP + NH4(+) + ATP = CTP + ADP + phosphate + 2 H(+). It participates in pyrimidine metabolism; CTP biosynthesis via de novo pathway; CTP from UDP: step 2/2. Its activity is regulated as follows. Allosterically activated by GTP, when glutamine is the substrate; GTP has no effect on the reaction when ammonia is the substrate. The allosteric effector GTP functions by stabilizing the protein conformation that binds the tetrahedral intermediate(s) formed during glutamine hydrolysis. Inhibited by the product CTP, via allosteric rather than competitive inhibition. In terms of biological role, catalyzes the ATP-dependent amination of UTP to CTP with either L-glutamine or ammonia as the source of nitrogen. Regulates intracellular CTP levels through interactions with the four ribonucleotide triphosphates. This Azospirillum brasilense protein is CTP synthase.